The chain runs to 314 residues: DNA-directed RNA polymerase subunit alpha (314 aa).

Residues 1 to 227 (MTYFQIECVE…SLFYPLTNLN (227 aa)) are alpha N-terminal domain (alpha-NTD). The interval 239 to 314 (EEEINQVLIE…LPKEKNIQNT (76 aa)) is alpha C-terminal domain (alpha-CTD).

It belongs to the RNA polymerase alpha chain family. In plastids the minimal PEP RNA polymerase catalytic core is composed of four subunits: alpha, beta, beta', and beta''. When a (nuclear-encoded) sigma factor is associated with the core the holoenzyme is formed, which can initiate transcription.

It is found in the plastid. The protein resides in the chloroplast. It carries out the reaction RNA(n) + a ribonucleoside 5'-triphosphate = RNA(n+1) + diphosphate. Functionally, DNA-dependent RNA polymerase catalyzes the transcription of DNA into RNA using the four ribonucleoside triphosphates as substrates. The protein is DNA-directed RNA polymerase subunit alpha of Gracilaria tenuistipitata var. liui (Red alga).